The sequence spans 318 residues: MQPLVLPGFFIPSPTVSAVEIGPLTIRFYALCILAGIVIGAWLTARRFRARGGTTAQAMDIIMWAVPFGIVGGRLYHVITDNQLYFGPGKDPWGAFRIWEGGLGIWGAVAVGLAGAAIGARRTGVRLATFADAAAPGLLLAQAMGRWGNWFNNELYGEPTNLPWKLQIHNMNPATGQAVLTADGTPETLGYFQPTFLYESLWCLAAAALLVFLDRRYKLGAGSVFALYVVLYTAGRFIFELMRSDYANTILGLRVNTWVSALLFLAALAVFLILRSRPRSASTAQSACSIDGFDTRANGHDPEKHDETDGKGNRHHVP.

A run of 7 helical transmembrane segments spans residues 23–43 (PLTIRFYALCILAGIVIGAWL), 59–79 (MDIIMWAVPFGIVGGRLYHVI), 98–118 (IWEGGLGIWGAVAVGLAGAAI), 124–146 (GVRLATFADAAAPGLLLAQAMGR), 192–212 (FQPTFLYESLWCLAAAALLVF), 219–239 (LGAGSVFALYVVLYTAGRFIF), and 253–273 (LRVNTWVSALLFLAALAVFLI). Arg146 contacts a 1,2-diacyl-sn-glycero-3-phospho-(1'-sn-glycerol). Over residues 293 to 312 (FDTRANGHDPEKHDETDGKG) the composition is skewed to basic and acidic residues. Residues 293–318 (FDTRANGHDPEKHDETDGKGNRHHVP) form a disordered region.

It belongs to the Lgt family.

Its subcellular location is the cell membrane. It catalyses the reaction L-cysteinyl-[prolipoprotein] + a 1,2-diacyl-sn-glycero-3-phospho-(1'-sn-glycerol) = an S-1,2-diacyl-sn-glyceryl-L-cysteinyl-[prolipoprotein] + sn-glycerol 1-phosphate + H(+). It functions in the pathway protein modification; lipoprotein biosynthesis (diacylglyceryl transfer). In terms of biological role, catalyzes the transfer of the diacylglyceryl group from phosphatidylglycerol to the sulfhydryl group of the N-terminal cysteine of a prolipoprotein, the first step in the formation of mature lipoproteins. This is Phosphatidylglycerol--prolipoprotein diacylglyceryl transferase from Paenarthrobacter aurescens (strain TC1).